The following is a 585-amino-acid chain: Nucleus accumbens-associated protein 2 (585 aa).

The BTB domain maps to 30–94; it reads CDVSIVVKGQ…CYTGKLTMAA (65 aa). Residues Lys171 and Lys215 each participate in a glycyl lysine isopeptide (Lys-Gly) (interchain with G-Cter in SUMO2) cross-link. Positions 238 to 261 are enriched in polar residues; sequence PYPQGERTSPGASSLPTTDSSTSY. The disordered stretch occupies residues 238–269; it reads PYPQGERTSPGASSLPTTDSSTSYHNEDEDDD. Glycyl lysine isopeptide (Lys-Gly) (interchain with G-Cter in SUMO2) cross-links involve residues Lys296, Lys426, and Lys453. The 98-residue stretch at 348–445 folds into the BEN domain; it reads GSGVYITRGQ…DMCTNARRVR (98 aa). Residues 541 to 585 are disordered; sequence APEQLPADGQSSPQAFEQGNTSSSRPQTPVATATRRPEGTYAGTL. Residues 549-571 show a composition bias toward polar residues; it reads GQSSPQAFEQGNTSSSRPQTPVA.

As to quaternary structure, homooligomer; mediated by the BTB domain. Interacts with the NuRD complex. Interacts (via C-terminal part) with HDAC2. Interacts (via BTB domain) with MTA1, MTA2 and MTA3.

It is found in the nucleus. Its function is as follows. Functions as a transcriptional repressor through its association with the NuRD complex. Recruits the NuRD complex to the promoter of MDM2, leading to the repression of MDM2 transcription and subsequent stability of p53/TP53. The sequence is that of Nucleus accumbens-associated protein 2 (Nacc2) from Rattus norvegicus (Rat).